Reading from the N-terminus, the 285-residue chain is 2-dehydro-3-deoxyphosphooctonate aldolase (285 aa).

The protein belongs to the KdsA family.

It localises to the cytoplasm. The catalysed reaction is D-arabinose 5-phosphate + phosphoenolpyruvate + H2O = 3-deoxy-alpha-D-manno-2-octulosonate-8-phosphate + phosphate. Its pathway is carbohydrate biosynthesis; 3-deoxy-D-manno-octulosonate biosynthesis; 3-deoxy-D-manno-octulosonate from D-ribulose 5-phosphate: step 2/3. It participates in bacterial outer membrane biogenesis; lipopolysaccharide biosynthesis. This chain is 2-dehydro-3-deoxyphosphooctonate aldolase, found in Bordetella parapertussis (strain 12822 / ATCC BAA-587 / NCTC 13253).